The sequence spans 254 residues: 5-oxoprolinase subunit A (254 aa).

This sequence belongs to the LamB/PxpA family. As to quaternary structure, forms a complex composed of PxpA, PxpB and PxpC.

The enzyme catalyses 5-oxo-L-proline + ATP + 2 H2O = L-glutamate + ADP + phosphate + H(+). Functionally, catalyzes the cleavage of 5-oxoproline to form L-glutamate coupled to the hydrolysis of ATP to ADP and inorganic phosphate. This chain is 5-oxoprolinase subunit A, found in Heliobacterium modesticaldum (strain ATCC 51547 / Ice1).